Consider the following 265-residue polypeptide: Small ribosomal subunit protein eS1 (265 aa).

Residues 234 to 256 form a disordered region; the sequence is EGSTTTSKGVTSEGGEKVDRVDG. Residues 247-256 are compositionally biased toward basic and acidic residues; that stretch reads GGEKVDRVDG.

This sequence belongs to the eukaryotic ribosomal protein eS1 family. In terms of assembly, component of the small ribosomal subunit. Mature ribosomes consist of a small (40S) and a large (60S) subunit. The 40S subunit contains about 33 different proteins and 1 molecule of RNA (18S). The 60S subunit contains about 49 different proteins and 3 molecules of RNA (28S, 5.8S and 5S).

It is found in the cytoplasm. In Aplysia californica (California sea hare), this protein is Small ribosomal subunit protein eS1.